Here is a 367-residue protein sequence, read N- to C-terminus: Putative F-box protein At4g10190 (367 aa).

Residues 3–53 (KRNIVDLPEDLVMEILARVPTVTLVRLQSTSKRWNVLIEDKRFAEQHFTNA) form the F-box domain.

This is Putative F-box protein At4g10190 from Arabidopsis thaliana (Mouse-ear cress).